The sequence spans 137 residues: Small ribosomal subunit protein uS12 (137 aa).

The residue at position 89 (aspartate 89) is a 3-methylthioaspartic acid. A disordered region spans residues 105-137; it reads AGVAGRTQRRSKYGAKRPKAGQAAAPAKGKGKK. Basic residues predominate over residues 111–123; sequence TQRRSKYGAKRPK. Low complexity predominate over residues 124 to 137; that stretch reads AGQAAAPAKGKGKK.

Belongs to the universal ribosomal protein uS12 family. Part of the 30S ribosomal subunit. Contacts proteins S8 and S17. May interact with IF1 in the 30S initiation complex.

Its function is as follows. With S4 and S5 plays an important role in translational accuracy. In terms of biological role, interacts with and stabilizes bases of the 16S rRNA that are involved in tRNA selection in the A site and with the mRNA backbone. Located at the interface of the 30S and 50S subunits, it traverses the body of the 30S subunit contacting proteins on the other side and probably holding the rRNA structure together. The combined cluster of proteins S8, S12 and S17 appears to hold together the shoulder and platform of the 30S subunit. The sequence is that of Small ribosomal subunit protein uS12 from Phocaeicola vulgatus (strain ATCC 8482 / DSM 1447 / JCM 5826 / CCUG 4940 / NBRC 14291 / NCTC 11154) (Bacteroides vulgatus).